Here is a 512-residue protein sequence, read N- to C-terminus: Maturase K (512 aa).

The protein belongs to the intron maturase 2 family. MatK subfamily.

Its subcellular location is the plastid. It localises to the chloroplast. In terms of biological role, usually encoded in the trnK tRNA gene intron. Probably assists in splicing its own and other chloroplast group II introns. The sequence is that of Maturase K from Amorphophallus titanum (Titan arum).